The following is a 148-amino-acid chain: MYVHSVIGNIEAKTPTKTIEWIELDWDELNKRILRKTTDHGREVAIVMEEQGLTFGDILYEGEDVAIAVRTKLEPAFVIRPKTMKEMGKTAFELGNRHTPCLVENDEIYVRYDSTLAALFNEIGVNYEQTEKRFKQPFKYKGHHHHHD.

Belongs to the UreE family.

It is found in the cytoplasm. In terms of biological role, involved in urease metallocenter assembly. Binds nickel. Probably functions as a nickel donor during metallocenter assembly. The polypeptide is Urease accessory protein UreE (Halalkalibacterium halodurans (strain ATCC BAA-125 / DSM 18197 / FERM 7344 / JCM 9153 / C-125) (Bacillus halodurans)).